A 511-amino-acid chain; its full sequence is 2-isopropylmalate synthase (511 aa).

The region spanning 6 to 269 is the Pyruvate carboxyltransferase domain; it reads IIIFDTTLRD…YTDIKCENIS (264 aa). The Mn(2+) site is built by D15, H203, H205, and N239. Residues 394 to 511 are regulatory domain; the sequence is VLEKLSVISG…SLKVEERKMA (118 aa).

Belongs to the alpha-IPM synthase/homocitrate synthase family. LeuA type 1 subfamily. Homodimer. Mn(2+) is required as a cofactor.

It is found in the cytoplasm. The catalysed reaction is 3-methyl-2-oxobutanoate + acetyl-CoA + H2O = (2S)-2-isopropylmalate + CoA + H(+). The protein operates within amino-acid biosynthesis; L-leucine biosynthesis; L-leucine from 3-methyl-2-oxobutanoate: step 1/4. Functionally, catalyzes the condensation of the acetyl group of acetyl-CoA with 3-methyl-2-oxobutanoate (2-ketoisovalerate) to form 3-carboxy-3-hydroxy-4-methylpentanoate (2-isopropylmalate). The polypeptide is 2-isopropylmalate synthase (Campylobacter jejuni subsp. doylei (strain ATCC BAA-1458 / RM4099 / 269.97)).